The chain runs to 215 residues: 3,4-dihydroxy-2-butanone 4-phosphate synthase (215 aa).

D-ribulose 5-phosphate-binding positions include arginine 37–glutamate 38, aspartate 42, arginine 150–threonine 154, and glutamate 174. Glutamate 38 is a binding site for Mg(2+). A Mg(2+)-binding site is contributed by histidine 153.

This sequence belongs to the DHBP synthase family. Homodimer. Mg(2+) is required as a cofactor. It depends on Mn(2+) as a cofactor.

The catalysed reaction is D-ribulose 5-phosphate = (2S)-2-hydroxy-3-oxobutyl phosphate + formate + H(+). Its pathway is cofactor biosynthesis; riboflavin biosynthesis; 2-hydroxy-3-oxobutyl phosphate from D-ribulose 5-phosphate: step 1/1. In terms of biological role, catalyzes the conversion of D-ribulose 5-phosphate to formate and 3,4-dihydroxy-2-butanone 4-phosphate. In Buchnera aphidicola subsp. Acyrthosiphon pisum (strain 5A), this protein is 3,4-dihydroxy-2-butanone 4-phosphate synthase.